We begin with the raw amino-acid sequence, 171 residues long: NADP-reducing hydrogenase subunit HndA (171 aa).

[2Fe-2S] cluster-binding residues include Cys98, Cys103, Cys139, and Cys143.

This sequence belongs to the complex I 24 kDa subunit family. In terms of assembly, heterotetramer composed of HndA, HndB, HndC and HndD subunits. HndA and HndB could form a heterodimeric intermediate in the electron transfer between the active site of hydrogenase subunit HndD and the NADP reduction site of the reducing subunit HndC. Requires [2Fe-2S] cluster as cofactor.

The enzyme catalyses H2 + NADP(+) = NADPH + H(+). Inhibited by oxygen. Its function is as follows. Catalyzes the reduction of NADP in the presence of molecular H(2) to yield NADPH. This chain is NADP-reducing hydrogenase subunit HndA (hndA), found in Solidesulfovibrio fructosivorans (Desulfovibrio fructosivorans).